The sequence spans 598 residues: Probable transporter mch1 (598 aa).

Positions 1 to 49 (MASPTPAPRPDQISASTPLLQSDSTSSCASSIRSLSPSRRRHRNGRTSP) are disordered. Residues 22-37 (SDSTSSCASSIRSLSP) show a composition bias toward low complexity. N-linked (GlcNAc...) asparagine glycosylation is present at Asn57. 6 helical membrane passes run 63 to 83 (ALLS…GHIF), 96 to 116 (GLSS…GYMC), 122 to 142 (GPLS…AAGV), 164 to 184 (LAYA…CSMY), 202 to 222 (GLAL…QSQL), and 241 to 261 (VFHF…LGTF). A disordered region spans residues 315-334 (AGILDPSKPDNDSDSEEEDD). Asn325 carries an N-linked (GlcNAc...) asparagine glycan. 6 helical membrane passes run 355–375 (HTMW…EAFI), 405–425 (IVGI…DLLA), 453–473 (FLLF…SGWI), 486–506 (LVGA…TVIW), 516–536 (GIVA…YSAV), and 565–585 (SAFW…LWAW).

This sequence belongs to the major facilitator superfamily.

It is found in the vacuole membrane. Probable transporter. The sequence is that of Probable transporter mch1 (mch1) from Neurospora crassa (strain ATCC 24698 / 74-OR23-1A / CBS 708.71 / DSM 1257 / FGSC 987).